The primary structure comprises 358 residues: 4-diphosphocytidyl-2-C-methyl-D-erythritol kinase (358 aa).

Lys24 is a catalytic residue. 138-148 (PVAGGMAGGSA) lines the ATP pocket. Asp186 is a catalytic residue.

The protein belongs to the GHMP kinase family. IspE subfamily.

The enzyme catalyses 4-CDP-2-C-methyl-D-erythritol + ATP = 4-CDP-2-C-methyl-D-erythritol 2-phosphate + ADP + H(+). The protein operates within isoprenoid biosynthesis; isopentenyl diphosphate biosynthesis via DXP pathway; isopentenyl diphosphate from 1-deoxy-D-xylulose 5-phosphate: step 3/6. Its function is as follows. Catalyzes the phosphorylation of the position 2 hydroxy group of 4-diphosphocytidyl-2C-methyl-D-erythritol. The protein is 4-diphosphocytidyl-2-C-methyl-D-erythritol kinase of Corynebacterium jeikeium (strain K411).